A 2269-amino-acid chain; its full sequence is Anaphase-promoting complex subunit 1 (2269 aa).

Disordered regions lie at residues 305–334 (PSSN…QTIN), 379–433 (SSPP…QENS), 609–644 (NNNN…RKPL), 804–845 (KVYP…NNNN), and 1136–1197 (STAS…NSTS). Low complexity-rich tracts occupy residues 306-334 (SSNA…QTIN), 379-430 (SSPP…QQQQ), 609-638 (NNNN…NNNN), 809-845 (NNNN…NNNN), and 1136-1159 (STAS…GQSN). Residues 1160-1177 (GLPMNSTTNQMNSHQINN) are compositionally biased toward polar residues. PC repeat units lie at residues 1440-1472 (AALM…PIND) and 1483-1520 (TAGM…ISKE). Residues 1535 to 1586 (STPSISSNRNNNDLFNNGSNNNSSSNGGGGGGGGNNNGNNSNNGNNGSSQFK) are disordered. The span at 1540–1559 (SSNRNNNDLFNNGSNNNSSS) shows a compositional bias: low complexity. The span at 1560 to 1570 (NGGGGGGGGNN) shows a compositional bias: gly residues. The span at 1571-1583 (NGNNSNNGNNGSS) shows a compositional bias: low complexity. 3 PC repeats span residues 1605–1637 (GAII…GLNY), 1722–1756 (GAAF…RQVY), and 1792–1807 (LVMA…KILR). Low complexity predominate over residues 1960–1993 (NNNNNNNNNNNNNNNNNNNNNNNNNNNNNNNNNN). Residues 1960-1997 (NNNNNNNNNNNNNNNNNNNNNNNNNNNNNNNNNNKNIL) form a disordered region.

Belongs to the APC1 family. As to quaternary structure, the APC/C is composed of at least 13 subunits that stay tightly associated throughout the cell cycle: anapc1, anapc2, anapc3, anapc4, anapc5, anapc6, anapc7, anapc8, anapc10, anapc11, cdc20, cdc26 and cdh1.

The protein resides in the nucleus. The protein operates within protein modification; protein ubiquitination. Functionally, component of the anaphase promoting complex/cyclosome (APC/C), a cell cycle-regulated E3 ubiquitin-protein ligase complex that controls progression through mitosis and the G1 phase of the cell cycle. This chain is Anaphase-promoting complex subunit 1 (anapc1), found in Dictyostelium discoideum (Social amoeba).